A 214-amino-acid chain; its full sequence is Cytochrome b (214 aa).

4 helical membrane-spanning segments follow: residues 31–51, 75–96, 111–131, and 176–196; these read FGSM…FLAI, WIMQ…YIHI, WLSG…GYVL, and FFAL…IHIL. 2 residues coordinate heme b: His-81 and His-95. Residues His-180 and His-194 each contribute to the heme b site. Residue His-199 participates in a ubiquinone binding.

The protein belongs to the cytochrome b family. In terms of assembly, the cytochrome bc1 complex contains 3 respiratory subunits (MT-CYB, CYC1 and UQCRFS1), 2 core proteins (UQCRC1 and UQCRC2) and probably 6 low-molecular weight proteins. Requires heme b as cofactor.

It is found in the mitochondrion inner membrane. Functionally, component of the ubiquinol-cytochrome c reductase complex (complex III or cytochrome b-c1 complex) that is part of the mitochondrial respiratory chain. The b-c1 complex mediates electron transfer from ubiquinol to cytochrome c. Contributes to the generation of a proton gradient across the mitochondrial membrane that is then used for ATP synthesis. In Bothrops atrox (Barba amarilla), this protein is Cytochrome b (MT-CYB).